An 802-amino-acid polypeptide reads, in one-letter code: Endoplasmin (802 aa).

A signal peptide spans 1-21 (MRVLWVLGLCCVLLTFGFVRA). An SRT pseudosubstrate motif motif is present at residues 42-44 (SRT). Asn-62 is a glycosylation site (N-linked (GlcNAc...) asparagine). Ser-64 is subject to Phosphoserine. Residue Asn-107 is glycosylated (N-linked (GlcNAc...) asparagine). 3 residues coordinate ATP: Asn-107, Asp-149, and Asn-162. Lys-168 carries the N6-(2-hydroxyisobutyryl)lysine modification. The residue at position 172 (Ser-172) is a Phosphoserine. Phe-199 provides a ligand contact to ATP. The N-linked (GlcNAc...) asparagine glycan is linked to Asn-217. Positions 290–317 (EEPLEEDEAAKEEKEESDDEAAVEEEEE) are enriched in acidic residues. The disordered stretch occupies residues 290-323 (EEPLEEDEAAKEEKEESDDEAAVEEEEEEKKPKT). Phosphoserine occurs at positions 306 and 403. At Lys-404 the chain carries N6-succinyllysine. Residue Asn-445 is glycosylated (N-linked (GlcNAc...) asparagine). The residue at position 447 (Ser-447) is a Phosphoserine. Lys-479 is modified (N6-acetyllysine). N-linked (GlcNAc...) asparagine glycosylation is found at Asn-481 and Asn-502. Residue Lys-633 is modified to N6-succinyllysine. The segment at 749-802 (IDPEAQVEEEPEEEPEDTSEDAEDSEQDEGEEMDAGTEEEEEETEKESTEKDEL) is disordered. Over residues 753-793 (AQVEEEPEEEPEDTSEDAEDSEQDEGEEMDAGTEEEEEETE) the composition is skewed to acidic residues. A Phosphothreonine modification is found at Thr-785. Residues 799–802 (KDEL) carry the Prevents secretion from ER motif.

Belongs to the heat shock protein 90 family. As to quaternary structure, homodimer; disulfide-linked. Component of an EIF2 complex at least composed of CELF1/CUGBP1, CALR, CALR3, EIF2S1, EIF2S2, HSP90B1 and HSPA5. Part of a large chaperone multiprotein complex comprising DNAJB11, HSP90B1, HSPA5, HYOU, PDIA2, PDIA4, PDIA6, PPIB, SDF2L1, UGGT1 and very small amounts of ERP29, but not, or at very low levels, CALR nor CANX. Hyperglycosylated form interacts with OS9; promoting its degradation by the endoplasmic reticulum associated degradation (ERAD). Interacts with AIMP1; regulates its retention in the endoplasmic reticulum. Interacts with CNPY3; this interaction is disrupted in the presence of ATP. Interacts with TLR4, TLR9 and TLR11, but not with TLR3. Interacts with MZB1 in a calcium-dependent manner. Interacts with METTL23. Interacts with IL1B; the interaction facilitates cargo translocation into the ERGIC. Interacts with EIF2AK3. Phosphorylated by CK2. Post-translationally, N-glycosylated cotranslationally at Asn-217 by STT3A-containing OST-A complex: this glycosylation is constitutive. In response to various stress, 5 additional facultative sites (Asn-62, Asn-107, Asn-445, Asn-481 and Asn-502) can be glycosylated post-translationally by STT3B-containing OST-B complex, leading to a hyperglycosylated form that is degraded by the ER-associated degradation (ERAD) pathway. In normal conditions, the OST-A complex together with CCDC134 prevent glycosylation at facultative sites during protein folding, thereby preventing hyperglycosylation. Mechanistically, nascent HSP90B1 is tethered during translation to a specialized CCDC134-containing translocon that forms a microenvironment for its folding, in which STT3A associates with the SRT pseudosubstrate motif, and prevents access to facultative glycosylation sites until folding is completed, rendering its facultative sites inaccessible to the OST-B complex.

It is found in the endoplasmic reticulum lumen. Its subcellular location is the sarcoplasmic reticulum lumen. It localises to the melanosome. It carries out the reaction ATP + H2O = ADP + phosphate + H(+). Its function is as follows. ATP-dependent chaperone involved in the processing of proteins in the endoplasmic reticulum, regulating their transport. Together with MESD, acts as a modulator of the Wnt pathway by promoting the folding of LRP6, a coreceptor of the canonical Wnt pathway. When associated with CNPY3, required for proper folding of Toll-like receptors. Promotes folding and trafficking of TLR4 to the cell surface. May participate in the unfolding of cytosolic leaderless cargos (lacking the secretion signal sequence) such as the interleukin 1/IL-1 to facilitate their translocation into the ERGIC (endoplasmic reticulum-Golgi intermediate compartment) and secretion; the translocation process is mediated by the cargo receptor TMED10. The polypeptide is Endoplasmin (Hsp90b1) (Mus musculus (Mouse)).